The following is a 371-amino-acid chain: Glutamate 5-kinase (371 aa).

Lysine 11 provides a ligand contact to ATP. Positions 52, 139, and 151 each coordinate substrate. Residues threonine 171–aspartate 172 and threonine 213–lysine 219 contribute to the ATP site. A PUA domain is found at glutamate 278–glutamate 356.

This sequence belongs to the glutamate 5-kinase family.

It is found in the cytoplasm. It catalyses the reaction L-glutamate + ATP = L-glutamyl 5-phosphate + ADP. It participates in amino-acid biosynthesis; L-proline biosynthesis; L-glutamate 5-semialdehyde from L-glutamate: step 1/2. Catalyzes the transfer of a phosphate group to glutamate to form L-glutamate 5-phosphate. The chain is Glutamate 5-kinase from Synechococcus sp. (strain JA-3-3Ab) (Cyanobacteria bacterium Yellowstone A-Prime).